Reading from the N-terminus, the 251-residue chain is Uridylate kinase (251 aa).

19-22 is a binding site for ATP; that stretch reads KLSG. A UMP-binding site is contributed by Gly61. Positions 62 and 66 each coordinate ATP. UMP contacts are provided by residues Asp81 and 142 to 149; that span reads TGNPYFTT. ATP is bound by residues Thr169, Tyr175, and Asp178.

The protein belongs to the UMP kinase family. In terms of assembly, homohexamer.

It is found in the cytoplasm. It catalyses the reaction UMP + ATP = UDP + ADP. The protein operates within pyrimidine metabolism; CTP biosynthesis via de novo pathway; UDP from UMP (UMPK route): step 1/1. Its activity is regulated as follows. Inhibited by UTP. Functionally, catalyzes the reversible phosphorylation of UMP to UDP. In Anaeromyxobacter dehalogenans (strain 2CP-C), this protein is Uridylate kinase.